The primary structure comprises 292 residues: MNTESAASTADRLRAAVHWLLPTRLLSRLTWHVARSPRPWLKNRLNRFLVRRYGLDLSEAEHSDPTAYPTFYALFTRALRPGARPLPEDPQALISPCDGTVSAVGHLHGERLIQAKGIEYSLRGLLHGLDPAPFRDGAFVTIYLSPRDYHRFHAPVAGRLQAERHVPGRLLTVAPSAVRAIRGLFLRNERHVTLWETVVGLVAVVPVGAVNVGSIETVWGGPVGEAPGLSRDFGPGEGVFLGRGEELGRFNLGSTVVVVLPAGVVRWADGLVAGRPVRMGEVLGRLRRADAR.

Catalysis depends on charge relay system; for autoendoproteolytic cleavage activity residues D98, H153, and S254. Residue S254 is the Schiff-base intermediate with substrate; via pyruvic acid; for decarboxylase activity of the active site. A Pyruvic acid (Ser); by autocatalysis modification is found at S254.

It belongs to the phosphatidylserine decarboxylase family. PSD-B subfamily. Prokaryotic type I sub-subfamily. Heterodimer of a large membrane-associated beta subunit and a small pyruvoyl-containing alpha subunit. Pyruvate is required as a cofactor. In terms of processing, is synthesized initially as an inactive proenzyme. Formation of the active enzyme involves a self-maturation process in which the active site pyruvoyl group is generated from an internal serine residue via an autocatalytic post-translational modification. Two non-identical subunits are generated from the proenzyme in this reaction, and the pyruvate is formed at the N-terminus of the alpha chain, which is derived from the carboxyl end of the proenzyme. The autoendoproteolytic cleavage occurs by a canonical serine protease mechanism, in which the side chain hydroxyl group of the serine supplies its oxygen atom to form the C-terminus of the beta chain, while the remainder of the serine residue undergoes an oxidative deamination to produce ammonia and the pyruvoyl prosthetic group on the alpha chain. During this reaction, the Ser that is part of the protease active site of the proenzyme becomes the pyruvoyl prosthetic group, which constitutes an essential element of the active site of the mature decarboxylase.

The protein localises to the cell membrane. The enzyme catalyses a 1,2-diacyl-sn-glycero-3-phospho-L-serine + H(+) = a 1,2-diacyl-sn-glycero-3-phosphoethanolamine + CO2. The protein operates within phospholipid metabolism; phosphatidylethanolamine biosynthesis; phosphatidylethanolamine from CDP-diacylglycerol: step 2/2. Functionally, catalyzes the formation of phosphatidylethanolamine (PtdEtn) from phosphatidylserine (PtdSer). In Halorhodospira halophila (strain DSM 244 / SL1) (Ectothiorhodospira halophila (strain DSM 244 / SL1)), this protein is Phosphatidylserine decarboxylase proenzyme.